We begin with the raw amino-acid sequence, 450 residues long: Flavin-containing monooxygenase FMO GS-OX-like 3 (450 aa).

17–22 is an FAD binding site; sequence GAGPAG. 215–220 lines the NADP(+) pocket; it reads GNSSSA.

This sequence belongs to the FMO family. It depends on FAD as a cofactor.

Its function is as follows. Catalyzes the conversion of methylthioalkyl glucosinolates of any chain length into methylsulfinylalkyl glucosinolates. The chain is Flavin-containing monooxygenase FMO GS-OX-like 3 from Arabidopsis thaliana (Mouse-ear cress).